The following is a 336-amino-acid chain: Corrinoid adenosyltransferase PduO (336 aa).

The pduON stretch occupies residues 1 to 185 (MAIYTRTGDA…IIREVSKRYL (185 aa)). Residues 194 to 336 (KETTPVALSF…IAAINVGTHQ (143 aa)) form a pduOC region. His-207 is a heme binding site. The Mg(2+) site is built by Glu-215 and Gln-218.

The protein belongs to the Cob(I)alamin adenosyltransferase family. PduO subfamily. As to quaternary structure, the C-terminal domain (PduOC) forms stable octamers and also crystallizes as an octamer. Forms a complex with PduS. Requires heme b as cofactor. The cofactor is Mg(2+).

Its subcellular location is the bacterial microcompartment. The catalysed reaction is cob(I)alamin-[corrinoid adenosyltransferase] + ATP = apo-[corrinoid adenosyltransferase] + adenosylcob(III)alamin + triphosphate. The protein operates within polyol metabolism; 1,2-propanediol degradation. Its pathway is cofactor biosynthesis; adenosylcobalamin biosynthesis. With respect to regulation, inhibited by ADP but not significantly by other nucleotides, inhibited by diphosphate and less well by triphosphate. Converts cob(I)alamin to adenosylcobalamin (adenosylcob(III)alamin), the cofactor for propanediol dehydratase. Found in the bacterial microcompartment (BMC) dedicated to 1,2-propanediol (1,2-PD) degradation. For adenosylcobalamin synthesis dATP can replace ATP, but no other nucleotides will substitute. PduS and PduO allow regeneration of the adenosylcobalamin cofactor within the BMC. Its function is as follows. The 1,2-PD-specific bacterial microcompartment (BMC) concentrates low levels of 1,2-PD catabolic enzymes, concentrates volatile reaction intermediates thus enhancing pathway flux and keeps the level of toxic, mutagenic propionaldehyde low. The sequence is that of Corrinoid adenosyltransferase PduO from Salmonella typhimurium (strain LT2 / SGSC1412 / ATCC 700720).